A 731-amino-acid polypeptide reads, in one-letter code: Nucleolar GTP-binding protein 2 (731 aa).

Met1 is subject to N-acetylmethionine. A disordered region spans residues 1-33 (MVKPKYKGRSTINPSKASTNPDRVQGAGGQNMR). Residues 10–22 (STINPSKASTNPD) are compositionally biased toward polar residues. Positions 207-368 (WGELYKVIDS…LIDCPGVVYP (162 aa)) constitute a CP-type G domain. GTP is bound by residues 317 to 324 (GYPNVGKS) and 361 to 365 (DCPGV). Residues 481 to 502 (VVPEAAQNNPGEEVTETAGEGS) are disordered. Position 504 is a phosphoserine (Ser504). The segment covering 555–589 (LEEELESFSDEEEEEQEQQRDDAEESSSEPEEENV) has biased composition (acidic residues). Disordered stretches follow at residues 555–594 (LEEELESFSDEEEEEQEQQRDDAEESSSEPEEENVGNDTK) and 630–731 (EKIF…RQKQ). Basic and acidic residues-rich tracts occupy residues 630 to 652 (EKIFAKPEEQRKTLEEDVDDRAP) and 662 to 671 (QREEEQEHSN). 2 stretches are compositionally biased toward basic residues: residues 681–695 (ERRRAVRQQRPKKVG) and 721–731 (KHKRKKFRQKQ).

This sequence belongs to the TRAFAC class YlqF/YawG GTPase family. NOG2 subfamily. In terms of assembly, interacts with LYAR and RPL23A. Interacts with the nuclear importin-beta receptor and, at a lower extent, with importin-alpha. In terms of tissue distribution, widely expressed, with the highest expression level in testis.

It is found in the nucleus. It localises to the nucleolus. Functionally, GTPase that associates with pre-60S ribosomal subunits in the nucleolus and is required for their nuclear export and maturation. May promote cell proliferation possibly by increasing p53/TP53 protein levels, and consequently those of its downstream product CDKN1A/p21, and decreasing RPL23A protein levels. The chain is Nucleolar GTP-binding protein 2 (GNL2) from Homo sapiens (Human).